We begin with the raw amino-acid sequence, 259 residues long: MSNVVTDPTNSKIQVRDLNFYYGKFHALKNISLDIEKNKVTAFIGPSGCGKSTLLRTFNKMFQLYPEQRAEGEILLDGQNILTDSQDVALLRAKVGMVFQKPTPFPMSIYDNIAFGVRLFEKLSRADMDERVQWALTKAALWSETKDKLHQSGYSLSGGQQQRLCIARGIAIRPEVLLLDEPCSALDPISTSRIEELITELKQDYTVVIVTHNMQQAARCSDYTAFMYLGELIEFSDTDKLFTAPAQRQTEDYITGRYG.

One can recognise an ABC transporter domain in the interval 13–254 (IQVRDLNFYY…PAQRQTEDYI (242 aa)). Position 45–52 (45–52 (GPSGCGKS)) interacts with ATP.

The protein belongs to the ABC transporter superfamily. Phosphate importer (TC 3.A.1.7) family. The complex is composed of two ATP-binding proteins (PstB), two transmembrane proteins (PstC and PstA) and a solute-binding protein (PstS).

It localises to the cell inner membrane. It catalyses the reaction phosphate(out) + ATP + H2O = ADP + 2 phosphate(in) + H(+). In terms of biological role, part of the ABC transporter complex PstSACB involved in phosphate import. Responsible for energy coupling to the transport system. The sequence is that of Phosphate import ATP-binding protein PstB from Edwardsiella tarda.